The sequence spans 223 residues: Proteasome subunit beta (223 aa).

The propeptide at 1–6 (MDTMKG) is removed in mature form; by autocatalysis. Catalysis depends on Thr-7, which acts as the Nucleophile.

The protein belongs to the peptidase T1B family. As to quaternary structure, the 20S proteasome core is composed of 14 alpha and 14 beta subunits that assemble into four stacked heptameric rings, resulting in a barrel-shaped structure. The two inner rings, each composed of seven catalytic beta subunits, are sandwiched by two outer rings, each composed of seven alpha subunits. The catalytic chamber with the active sites is on the inside of the barrel. Has a gated structure, the ends of the cylinder being occluded by the N-termini of the alpha-subunits. Is capped at one or both ends by the proteasome regulatory ATPase, PAN.

The protein resides in the cytoplasm. The catalysed reaction is Cleavage of peptide bonds with very broad specificity.. The formation of the proteasomal ATPase PAN-20S proteasome complex, via the docking of the C-termini of PAN into the intersubunit pockets in the alpha-rings, triggers opening of the gate for substrate entry. Interconversion between the open-gate and close-gate conformations leads to a dynamic regulation of the 20S proteasome proteolysis activity. Functionally, component of the proteasome core, a large protease complex with broad specificity involved in protein degradation. This Methanocaldococcus vulcanius (strain ATCC 700851 / DSM 12094 / M7) (Methanococcus vulcanius) protein is Proteasome subunit beta.